The chain runs to 98 residues: NADH-ubiquinone oxidoreductase chain 4L (98 aa).

3 helical membrane-spanning segments follow: residues 2–22 (MMAVLNISLAFIFSLLGTLMF), 26–46 (LMSTLLCLEGMMLTLFIITTI), and 59–79 (IPIVILVFAACEAAVGLALLV).

Belongs to the complex I subunit 4L family. As to quaternary structure, core subunit of respiratory chain NADH dehydrogenase (Complex I) which is composed of 45 different subunits.

The protein resides in the mitochondrion inner membrane. The enzyme catalyses a ubiquinone + NADH + 5 H(+)(in) = a ubiquinol + NAD(+) + 4 H(+)(out). Core subunit of the mitochondrial membrane respiratory chain NADH dehydrogenase (Complex I) which catalyzes electron transfer from NADH through the respiratory chain, using ubiquinone as an electron acceptor. Part of the enzyme membrane arm which is embedded in the lipid bilayer and involved in proton translocation. This chain is NADH-ubiquinone oxidoreductase chain 4L (MT-ND4L), found in Phodopus sungorus (Striped hairy-footed hamster).